We begin with the raw amino-acid sequence, 570 residues long: Double-stranded RNA-binding protein Staufen homolog 2 (570 aa).

One can recognise a DRBM 1 domain in the interval Thr-8 to Leu-75. Disordered stretches follow at residues Thr-71–Ile-94 and Ala-178–Asp-203. Over residues Pro-83–Ile-94 the composition is skewed to polar residues. Residues Thr-95–Asn-181 form the DRBM 2 domain. Ser-188 carries the phosphoserine modification. Residues Ser-194–Asp-203 show a composition bias toward basic and acidic residues. DRBM domains are found at residues Ser-207–Lys-274 and Asn-307–Tyr-375. 2 short sequence motifs (nuclear localization signal) span residues Lys-273–Arg-291 and Leu-373–Ile-412. The interval Leu-381–Leu-413 is disordered. The tract at residues Leu-381 to Ile-570 is required for dendritic transport. Ser-395 is modified (phosphoserine). Thr-405 bears the Phosphothreonine mark. A phosphoserine mark is found at Ser-416, Ser-426, Ser-440, Ser-455, and Ser-492. Positions Leu-545 to Ile-570 are disordered. Residues Asn-551–Gln-561 show a composition bias toward polar residues.

Interacts with microtubules. Isoform 2 and isoform 3 may also interact with ribosomes, and this association is independent of translation. Identified in a mRNP complex, at least composed of DHX9, DDX3X, ELAVL1, HNRNPU, IGF2BP1, ILF3, PABPC1, PCBP2, PTBP2, STAU1, STAU2, SYNCRIP and YBX1. Interacts with the exportin XPO5. This requires RNA and RAN bound to GTP. Interacts with TRIM71 (via NHL repeats) in an RNA-dependent manner. As to expression, expressed in brain and neurons, where isoform 2 and isoform 3 appear to be the most abundant. Expressed at the neuromuscular junction of the extensor digitorum longus, tibialis anterior and soleus muscles. Expression at neuromuscular junctions is most pronounced in slow-twitch muscle. Also weakly expressed in heart, kidney, ovary and testis.

The protein localises to the cytoplasm. Its subcellular location is the nucleus. It localises to the nucleolus. It is found in the endoplasmic reticulum. RNA-binding protein required for the microtubule-dependent transport of neuronal RNA from the cell body to the dendrite. As protein synthesis occurs within the dendrite, the localization of specific mRNAs to dendrites may be a prerequisite for neurite outgrowth and plasticity at sites distant from the cell body. This is Double-stranded RNA-binding protein Staufen homolog 2 (Stau2) from Mus musculus (Mouse).